Reading from the N-terminus, the 172-residue chain is C-phycocyanin beta chain (172 aa).

N72 bears the N4-methylasparagine mark. (2R,3E)-phycocyanobilin is bound by residues C82 and C153.

The protein belongs to the phycobiliprotein family. As to quaternary structure, heterodimer of an alpha and a beta subunit, which further assembles into trimers and the trimers into hexamers. The basic functional unit of phycobiliproteins is a ring-shaped hexamer formed from two back-to-back trimers contacting via the alpha chain subunits. The trimers are composed of alpha/beta subunit heterodimers arranged around a three-fold axis of symmetry. The phycoerythrins also contain a gamma subunit which is located in the center of the hexamer. Contains two covalently linked bilin chromophores.

It localises to the plastid. The protein resides in the chloroplast thylakoid membrane. Functionally, light-harvesting photosynthetic bile pigment-protein from the phycobiliprotein complex (phycobilisome, PBS). Phycocyanin is the major phycobiliprotein in the PBS rod. The polypeptide is C-phycocyanin beta chain (cpcB) (Porphyra purpurea (Red seaweed)).